We begin with the raw amino-acid sequence, 229 residues long: 3-isopropylmalate dehydratase small subunit (229 aa).

Residues leucine 198–isoleucine 229 are disordered. The span at valine 200 to glutamate 215 shows a compositional bias: basic and acidic residues.

The protein belongs to the LeuD family. LeuD type 1 subfamily. In terms of assembly, heterodimer of LeuC and LeuD.

It catalyses the reaction (2R,3S)-3-isopropylmalate = (2S)-2-isopropylmalate. Its pathway is amino-acid biosynthesis; L-leucine biosynthesis; L-leucine from 3-methyl-2-oxobutanoate: step 2/4. Functionally, catalyzes the isomerization between 2-isopropylmalate and 3-isopropylmalate, via the formation of 2-isopropylmaleate. The polypeptide is 3-isopropylmalate dehydratase small subunit (Bifidobacterium adolescentis (strain ATCC 15703 / DSM 20083 / NCTC 11814 / E194a)).